Consider the following 464-residue polypeptide: Argininosuccinate lyase (464 aa).

The protein belongs to the lyase 1 family. Argininosuccinate lyase subfamily.

The protein resides in the cytoplasm. It carries out the reaction 2-(N(omega)-L-arginino)succinate = fumarate + L-arginine. The protein operates within amino-acid biosynthesis; L-arginine biosynthesis; L-arginine from L-ornithine and carbamoyl phosphate: step 3/3. In Moorella thermoacetica (strain ATCC 39073 / JCM 9320), this protein is Argininosuccinate lyase.